Here is a 298-residue protein sequence, read N- to C-terminus: Tyrosine recombinase XerC (298 aa).

The Core-binding (CB) domain maps to 1–84 (MNHIQEAFLN…TLRTFYEYWM (84 aa)). The Tyr recombinase domain maps to 105–286 (YLPQFFYEEE…SNQQLRKVYL (182 aa)). Catalysis depends on residues Arg-145, Lys-169, His-238, Arg-241, and His-264. The active-site O-(3'-phospho-DNA)-tyrosine intermediate is the Tyr-273.

It belongs to the 'phage' integrase family. XerC subfamily. As to quaternary structure, forms a cyclic heterotetrameric complex composed of two molecules of XerC and two molecules of XerD.

It localises to the cytoplasm. Its function is as follows. Site-specific tyrosine recombinase, which acts by catalyzing the cutting and rejoining of the recombining DNA molecules. The XerC-XerD complex is essential to convert dimers of the bacterial chromosome into monomers to permit their segregation at cell division. It also contributes to the segregational stability of plasmids. This Staphylococcus aureus (strain Mu3 / ATCC 700698) protein is Tyrosine recombinase XerC.